Consider the following 456-residue polypeptide: Exodeoxyribonuclease 7 large subunit (456 aa).

This sequence belongs to the XseA family. Heterooligomer composed of large and small subunits.

It is found in the cytoplasm. The catalysed reaction is Exonucleolytic cleavage in either 5'- to 3'- or 3'- to 5'-direction to yield nucleoside 5'-phosphates.. In terms of biological role, bidirectionally degrades single-stranded DNA into large acid-insoluble oligonucleotides, which are then degraded further into small acid-soluble oligonucleotides. The polypeptide is Exodeoxyribonuclease 7 large subunit (Shigella boydii serotype 18 (strain CDC 3083-94 / BS512)).